Here is a 118-residue protein sequence, read N- to C-terminus: Ribosome-binding factor A (118 aa).

It belongs to the RbfA family. As to quaternary structure, monomer. Binds 30S ribosomal subunits, but not 50S ribosomal subunits or 70S ribosomes.

It localises to the cytoplasm. In terms of biological role, one of several proteins that assist in the late maturation steps of the functional core of the 30S ribosomal subunit. Associates with free 30S ribosomal subunits (but not with 30S subunits that are part of 70S ribosomes or polysomes). Required for efficient processing of 16S rRNA. May interact with the 5'-terminal helix region of 16S rRNA. The polypeptide is Ribosome-binding factor A (Latilactobacillus sakei subsp. sakei (strain 23K) (Lactobacillus sakei subsp. sakei)).